The following is a 430-amino-acid chain: 3-phosphoshikimate 1-carboxyvinyltransferase (430 aa).

3-phosphoshikimate is bound by residues Lys20, Ser21, and Arg25. Lys20 contacts phosphoenolpyruvate. Positions 92 and 120 each coordinate phosphoenolpyruvate. 3-phosphoshikimate contacts are provided by Ser166, Gln168, Asp312, and Lys339. Gln168 is a phosphoenolpyruvate binding site. The Proton acceptor role is filled by Asp312. Phosphoenolpyruvate-binding residues include Arg343 and Arg387.

Belongs to the EPSP synthase family. As to quaternary structure, monomer.

The protein localises to the cytoplasm. It carries out the reaction 3-phosphoshikimate + phosphoenolpyruvate = 5-O-(1-carboxyvinyl)-3-phosphoshikimate + phosphate. The protein operates within metabolic intermediate biosynthesis; chorismate biosynthesis; chorismate from D-erythrose 4-phosphate and phosphoenolpyruvate: step 6/7. In terms of biological role, catalyzes the transfer of the enolpyruvyl moiety of phosphoenolpyruvate (PEP) to the 5-hydroxyl of shikimate-3-phosphate (S3P) to produce enolpyruvyl shikimate-3-phosphate and inorganic phosphate. The polypeptide is 3-phosphoshikimate 1-carboxyvinyltransferase (Lactococcus lactis subsp. lactis (strain IL1403) (Streptococcus lactis)).